A 162-amino-acid polypeptide reads, in one-letter code: Interleukin-15 (162 aa).

A signal peptide spans Met-1–Ala-29. A propeptide spanning residues Gly-30–Ala-48 is cleaved from the precursor. Cystine bridges form between Cys-83–Cys-133 and Cys-90–Cys-136. The N-linked (GlcNAc...) asparagine glycan is linked to Asn-127.

Belongs to the IL-15/IL-21 family.

It is found in the secreted. In terms of biological role, cytokine that plays a major role in the development of inflammatory and protective immune responses to microbial invaders and parasites by modulating immune cells of both the innate and adaptive immune systems. Stimulates the proliferation of natural killer cells, T-cells and B-cells and promotes the secretion of several cytokines. In monocytes, induces the production of IL8 and monocyte chemotactic protein 1/CCL2, two chemokines that attract neutrophils and monocytes respectively to sites of infection. Unlike most cytokines, which are secreted in soluble form, IL15 is expressed in association with its high affinity IL15RA on the surface of IL15-producing cells and delivers signals to target cells that express IL2RB and IL2RG receptor subunits. Binding to its receptor triggers the phosphorylation of JAK1 and JAK3 and the recruitment and subsequent phosphorylation of signal transducer and activator of transcription-3/STAT3 and STAT5. In mast cells, induces the rapid tyrosine phosphorylation of STAT6 and thereby controls mast cell survival and release of cytokines such as IL4. In Macaca thibetana (Pere David's macaque), this protein is Interleukin-15 (IL15).